Reading from the N-terminus, the 127-residue chain is Holo-[acyl-carrier-protein] synthase (127 aa).

Residues Asp-9 and Glu-58 each coordinate Mg(2+).

Belongs to the P-Pant transferase superfamily. AcpS family. Requires Mg(2+) as cofactor.

The protein localises to the cytoplasm. The enzyme catalyses apo-[ACP] + CoA = holo-[ACP] + adenosine 3',5'-bisphosphate + H(+). Its function is as follows. Transfers the 4'-phosphopantetheine moiety from coenzyme A to a Ser of acyl-carrier-protein. The sequence is that of Holo-[acyl-carrier-protein] synthase from Shewanella baltica (strain OS155 / ATCC BAA-1091).